Here is a 276-residue protein sequence, read N- to C-terminus: Polyamine aminopropyltransferase (276 aa).

The PABS domain maps to 3–236; the sequence is ELWYTEKQTK…GLWTFTIGSK (234 aa). Residue Q32 coordinates S-methyl-5'-thioadenosine. Spermidine contacts are provided by H63 and D87. S-methyl-5'-thioadenosine contacts are provided by residues D107 and 138–139; that span reads DG. D156 (proton acceptor) is an active-site residue. 156-159 is a spermidine binding site; it reads DSTE. P163 contacts S-methyl-5'-thioadenosine.

Belongs to the spermidine/spermine synthase family. As to quaternary structure, homodimer or homotetramer.

The protein localises to the cytoplasm. The enzyme catalyses S-adenosyl 3-(methylsulfanyl)propylamine + putrescine = S-methyl-5'-thioadenosine + spermidine + H(+). The protein operates within amine and polyamine biosynthesis; spermidine biosynthesis; spermidine from putrescine: step 1/1. In terms of biological role, involved in the cell growth and proliferation. Catalyzes the irreversible transfer of a propylamine group from the amino donor S-adenosylmethioninamine (decarboxy-AdoMet) to putrescine (1,4-diaminobutane) to yield spermidine. The chain is Polyamine aminopropyltransferase from Bacillus subtilis (strain 168).